Reading from the N-terminus, the 477-residue chain is Cysteine--tRNA ligase (477 aa).

A Zn(2+)-binding site is contributed by cysteine 30. The 'HIGH' region motif lies at 32 to 42 (PTVYDYNHIGH). Cysteine 209, histidine 234, and glutamate 238 together coordinate Zn(2+). The 'KMSKS' region signature appears at 267-271 (KMSKS). Lysine 270 serves as a coordination point for ATP.

The protein belongs to the class-I aminoacyl-tRNA synthetase family. It depends on Zn(2+) as a cofactor.

The protein resides in the cytoplasm. It carries out the reaction tRNA(Cys) + L-cysteine + ATP = L-cysteinyl-tRNA(Cys) + AMP + diphosphate. The protein is Cysteine--tRNA ligase of Staphylothermus marinus (strain ATCC 43588 / DSM 3639 / JCM 9404 / F1).